The chain runs to 323 residues: tRNA U34 carboxymethyltransferase (323 aa).

Residues Lys91, Trp105, Lys110, Gly130, 152 to 154 (DPT), 181 to 182 (IE), Met196, Tyr200, and Arg315 each bind carboxy-S-adenosyl-L-methionine.

This sequence belongs to the class I-like SAM-binding methyltransferase superfamily. CmoB family. As to quaternary structure, homotetramer.

The enzyme catalyses carboxy-S-adenosyl-L-methionine + 5-hydroxyuridine(34) in tRNA = 5-carboxymethoxyuridine(34) in tRNA + S-adenosyl-L-homocysteine + H(+). Catalyzes carboxymethyl transfer from carboxy-S-adenosyl-L-methionine (Cx-SAM) to 5-hydroxyuridine (ho5U) to form 5-carboxymethoxyuridine (cmo5U) at position 34 in tRNAs. The sequence is that of tRNA U34 carboxymethyltransferase from Escherichia fergusonii (strain ATCC 35469 / DSM 13698 / CCUG 18766 / IAM 14443 / JCM 21226 / LMG 7866 / NBRC 102419 / NCTC 12128 / CDC 0568-73).